We begin with the raw amino-acid sequence, 333 residues long: Gap junction alpha-4 protein (333 aa).

Topologically, residues 1–20 (MGDWGFLEKLLDQVQEHSTV) are cytoplasmic. The helical transmembrane segment at 21–40 (VGKIWLTVLFIFRILILGLA) threads the bilayer. The Extracellular segment spans residues 41 to 76 (GESVWGDEQSDFECNTAQPGCTNVCYDQAFPISHIR). The helical transmembrane segment at 77 to 99 (YWVLQFLFVSTPTLVYLGHVIYL) threads the bilayer. Topologically, residues 100–148 (SRREERLRQKEGELRALPAKDPRVERALASIERQMAKISVAEDGHLRIR) are cytoplasmic. The helical transmembrane segment at 149–165 (GALMGTYVASVLCKSVL) threads the bilayer. Topologically, residues 166–207 (EAGFLYGQWRLYGWTMEPVFVCQRSPCPYLVDCFVSRPTEKT) are extracellular. The helical transmembrane segment at 208–230 (IFIIFMLVVGLISLVLNLLELAY) threads the bilayer. Over 231 to 333 (LLCRCLSRGV…SSSASKKQYV (103 aa)) the chain is Cytoplasmic. Positions 303 to 333 (SRAPLFLDPPPQTGRKSPSRPSSSASKKQYV) are disordered. Residues 317–333 (RKSPSRPSSSASKKQYV) are compositionally biased toward low complexity.

Belongs to the connexin family. Alpha-type (group II) subfamily. In terms of assembly, a connexon is composed of a hexamer of connexins.

Its subcellular location is the cell membrane. The protein localises to the cell junction. It is found in the gap junction. Its function is as follows. One gap junction consists of a cluster of closely packed pairs of transmembrane channels, the connexons, through which materials of low MW diffuse from one cell to a neighboring cell. In Bos taurus (Bovine), this protein is Gap junction alpha-4 protein (GJA4).